The following is a 904-amino-acid chain: Disks large homolog 1 (904 aa).

Residues 4–64 enclose the L27 domain; the sequence is RKQDTQRALH…FYEVTLLDNP (61 aa). Position 115 is a phosphothreonine (Thr-115). A phosphoserine mark is found at Ser-122, Ser-138, and Ser-158. An interaction with SH3 domains region spans residues 162-212; the sequence is PTEAVLPSPPTVPVIPVLPVPAENTVILPTIPQANPPPVLVNTDSLETPTY. 3 PDZ domains span residues 224–310, 319–405, and 466–546; these read EITL…VKRR, EIKL…VAKP, and KVVL…AQYR. The tract at residues 224 to 546 is required for interaction with MARCHF2; it reads EITLERGNSG…QAVTIVAQYR (323 aa). A Phosphoserine modification is found at Ser-232. Position 399 is a phosphotyrosine (Tyr-399). Phosphoserine occurs at positions 568, 573, 575, 579, 598, 619, 676, 684, 687, 709, and 834. The SH3 domain occupies 581 to 651; it reads KRSLYVRALF…PSKRRVEKKE (71 aa). The tract at residues 662–693 is disordered; sequence SKTRDKGEIPDDMGSKGLKHVTSNASDSESSY. Positions 682–693 are enriched in polar residues; it reads VTSNASDSESSY. The 176-residue stretch at 714–889 folds into the Guanylate kinase-like domain; sequence TRPVIILGPM…IYNQVKQIIE (176 aa).

This sequence belongs to the MAGUK family. Homotetramer. Interacts (via guanylate kinase-like domain) with DLGAP1, DLGAP2, DLGAP3, DLGAP4 and MAP1A. Interacts (via guanylate kinase-like domain) with KIF13B. May interact with HTR2A. Interacts (via PDZ domains) with GRIA1. Interacts (via PDZ domains) with GRIN2A. Interacts (via PDZ domains) with KCND2 and KCND3. Interacts (via PDZ domains) with KCNA1, KCNA2, KCNA3 and KCNA4. Interacts (via PDZ domains) with ADGRA3. Interacts with KCNF1. Interacts with CAMK2. Interacts with cytoskeleton-associated protein EPB41. Interacts with cytoskeleton-associated protein EZR. Found in a complex with KCNA5 and CAV3. Found in a complex with APC and CTNNB1. Interacts (via PDZ domains) with APC. Interacts with CDH1 through binding to PIK3R1. Forms multiprotein complexes with CASK, LIN7A, LIN7B, LIN7C, APBA1, and KCNJ12. Interacts with TOPK. Forms a tripartite complex composed of DLG1, MPP7 and LIN7 (LIN7A or LIN7C). May interact with TJAP1. Interacts with PTEN. Interacts with FRMPD4 (via C-terminus). Interacts with LRFN1, LRFN2 and LRFN4. Interacts with SFPQ. Interacts (via PDZ domains) with ADGRA2 (via PDZ-binding motif). Interacts with ADAM10; this interaction recruits ADAM10 to the cell membrane during long-term depression in hippocampal neurons. Interacts with DGKI (via PDZ-binding motif). Interacts (via PDZ domains) with MARCHF2 (via PDZ domain); the interaction leads to DLG1 ubiqtuitination and degradation. Interacts (via N-terminus) with MPP3; this interaction connects CADM1 with DLG1 and links CADM1 with the regulatory subunit of phosphoinositide-3-kinase (PI3K) by forming a multiprotein complex and participates in cell spreading. As to quaternary structure, (Microbial infection) Interacts with HTLV-1 protein Tax. In terms of assembly, (Microbial infection) Interacts (via PDZ domains 1 and 2) with influenza A virus protein NS1; the interaction results in the translocation of DLG1 from the cell membrane to perinuclear puncta. Acts as a scaffold protein to facilitate the interaction between LIN7C and influenza A virus protein NS1; the interaction facilitates translocation of LIN7C to cytoplasmic puncta. (Microbial infection) Interacts with human papillomavirus 18/HPV-18 protein E6. Phosphorylated by MAPK12. Phosphorylation of Ser-232 regulates association with GRIN2A. Post-translationally, ubiquitinated; by MARCHF2 which results in its degradation. In terms of tissue distribution, abundantly expressed in atrial myocardium (at protein level). Expressed in lung fibroblasts, cervical epithelial and B-cells (at protein level). Expressed in the brain (at protein level). Widely expressed, with isoforms displaying different expression profiles.

The protein localises to the cell membrane. It localises to the basolateral cell membrane. The protein resides in the endoplasmic reticulum membrane. It is found in the postsynaptic density. Its subcellular location is the synapse. The protein localises to the sarcolemma. It localises to the apical cell membrane. The protein resides in the cell junction. It is found in the cytoplasm. In terms of biological role, essential multidomain scaffolding protein required for normal development. Recruits channels, receptors and signaling molecules to discrete plasma membrane domains in polarized cells. Promotes epithelial cell layer barrier function via maintaining cell-cell adhesion. May also play a role in adherens junction assembly, signal transduction, cell proliferation, synaptogenesis and lymphocyte activation. Regulates the excitability of cardiac myocytes by modulating the functional expression of Kv4 channels. Functional regulator of Kv1.5 channel. During long-term depression in hippocampal neurons, it recruits ADAM10 to the plasma membrane. The protein is Disks large homolog 1 of Homo sapiens (Human).